Consider the following 593-residue polypeptide: Proteasome-associated ATPase (593 aa).

A coiled-coil region spans residues 5 to 94 (DDADSRAARW…KEEIDRLAQP (90 aa)). Residue 281–286 (GCGKTL) participates in ATP binding. The interval 574 to 593 (GKGADAGRSIETASNTGQYL) is disordered. Polar residues predominate over residues 584–593 (ETASNTGQYL). Positions 592-593 (YL) are docks into pockets in the proteasome alpha-ring.

This sequence belongs to the AAA ATPase family. Homohexamer. Assembles into a hexameric ring structure that caps the 20S proteasome core. Strongly interacts with the prokaryotic ubiquitin-like protein Pup through a hydrophobic interface; the interacting region of ARC lies in its N-terminal coiled-coil domain. There is one Pup binding site per ARC hexamer ring. Upon ATP-binding, the C-terminus of ARC interacts with the alpha-rings of the proteasome core, possibly by binding to the intersubunit pockets.

It functions in the pathway protein degradation; proteasomal Pup-dependent pathway. Its function is as follows. ATPase which is responsible for recognizing, binding, unfolding and translocation of pupylated proteins into the bacterial 20S proteasome core particle. May be essential for opening the gate of the 20S proteasome via an interaction with its C-terminus, thereby allowing substrate entry and access to the site of proteolysis. Thus, the C-termini of the proteasomal ATPase may function like a 'key in a lock' to induce gate opening and therefore regulate proteolysis. The protein is Proteasome-associated ATPase of Salinispora tropica (strain ATCC BAA-916 / DSM 44818 / JCM 13857 / NBRC 105044 / CNB-440).